The primary structure comprises 604 residues: Elongation factor 4 (604 aa).

The 183-residue stretch at 7-189 folds into the tr-type G domain; the sequence is SKIRNFCIIA…SIVHLVPPPS (183 aa). GTP-binding positions include 19 to 24 and 136 to 139; these read DHGKST and NKID.

This sequence belongs to the TRAFAC class translation factor GTPase superfamily. Classic translation factor GTPase family. LepA subfamily.

It localises to the cell inner membrane. The catalysed reaction is GTP + H2O = GDP + phosphate + H(+). Its function is as follows. Required for accurate and efficient protein synthesis under certain stress conditions. May act as a fidelity factor of the translation reaction, by catalyzing a one-codon backward translocation of tRNAs on improperly translocated ribosomes. Back-translocation proceeds from a post-translocation (POST) complex to a pre-translocation (PRE) complex, thus giving elongation factor G a second chance to translocate the tRNAs correctly. Binds to ribosomes in a GTP-dependent manner. This is Elongation factor 4 from Synechococcus elongatus (strain ATCC 33912 / PCC 7942 / FACHB-805) (Anacystis nidulans R2).